The primary structure comprises 389 residues: MGIKGLTALLSENAPGAMREQKFTSYLDRRVAIDASMHIYQFMIAVGRTGEQTLTNEAGEVTSHLQGMLMRTSRMLEAGIKPVYVFDGKPPTMKGGELAKRKDKREEAEAALKAAREAGNQEEVEKLSKRTVRVSKEQSMEVMKLAQLLGIPAFEAPCEAEATCAAMCKAGLVWAVGTEDMDTLTFAAPRVARNLMAPKSAEKPVLEFDYEKTIAGLGLTADQFIDLCILCGCDYTDTIRGVGPKTALKLIKEHGSIEKILEAIDTEKYPPPKDWEFAGARELFKNPEVMDVSGINLSWKAPDEEGLVEFLVKEKQFQEDRVRGVCARIRKARQGAASQNRLESFFGPPKIISSTIGKRKVEETKSGKGSKAGLNKKSKGVSGYKSKKT.

The segment at 1 to 105 (MGIKGLTALL…GELAKRKDKR (105 aa)) is N-domain. Asp-34 contributes to the Mg(2+) binding site. Arg-71 is a binding site for DNA. Residues Asp-87, Glu-159, Glu-161, Asp-180, and Asp-182 each coordinate Mg(2+). The tract at residues 123–254 (EVEKLSKRTV…KTALKLIKEH (132 aa)) is I-domain. Glu-159 is a DNA binding site. Positions 232 and 234 each coordinate DNA. Asp-234 provides a ligand contact to Mg(2+). Residues 338 to 346 (SQNRLESFF) form an interaction with PCNA region. Residues 356–389 (IGKRKVEETKSGKGSKAGLNKKSKGVSGYKSKKT) form a disordered region. Residues 374–389 (LNKKSKGVSGYKSKKT) are compositionally biased toward basic residues.

The protein belongs to the XPG/RAD2 endonuclease family. FEN1 subfamily. As to quaternary structure, interacts with PCNA. Three molecules of FEN1 bind to one PCNA trimer with each molecule binding to one PCNA monomer. PCNA stimulates the nuclease activity without altering cleavage specificity. Mg(2+) serves as cofactor. In terms of processing, phosphorylated. Phosphorylation upon DNA damage induces relocalization to the nuclear plasma.

Its subcellular location is the nucleus. It is found in the nucleolus. The protein resides in the nucleoplasm. It localises to the mitochondrion. Functionally, structure-specific nuclease with 5'-flap endonuclease and 5'-3' exonuclease activities involved in DNA replication and repair. During DNA replication, cleaves the 5'-overhanging flap structure that is generated by displacement synthesis when DNA polymerase encounters the 5'-end of a downstream Okazaki fragment. It enters the flap from the 5'-end and then tracks to cleave the flap base, leaving a nick for ligation. Also involved in the long patch base excision repair (LP-BER) pathway, by cleaving within the apurinic/apyrimidinic (AP) site-terminated flap. Acts as a genome stabilization factor that prevents flaps from equilibrating into structures that lead to duplications and deletions. Also possesses 5'-3' exonuclease activity on nicked or gapped double-stranded DNA, and exhibits RNase H activity. Also involved in replication and repair of rDNA and in repairing mitochondrial DNA. The sequence is that of Flap endonuclease 1 from Ostreococcus tauri.